Reading from the N-terminus, the 120-residue chain is U13-lycotoxin-Ls1d (120 aa).

A signal peptide spans 1–16 (MKILFVLISILYAVYC). A propeptide spanning residues 17–54 (FSSEEDVDSAYLANELEPVEDINSEQYAALEPKEEQER) is cleaved from the precursor. 4 cysteine pairs are disulfide-bonded: Cys56/Cys70, Cys63/Cys76, Cys69/Cys87, and Cys78/Cys85. An Agouti domain is found at 56 to 95 (CADMGQDCKDDCDCCLNIATCNCRFGRYFCSCTFGDYQTC).

It belongs to the neurotoxin 05 (agouti) family. Contains 6 disulfide bonds. As to expression, expressed by the venom gland.

It is found in the secreted. The polypeptide is U13-lycotoxin-Ls1d (Lycosa singoriensis (Wolf spider)).